We begin with the raw amino-acid sequence, 630 residues long: Transcription factor MYC1 (630 aa).

2 disordered regions span residues 356–398 and 430–463; these read FGDS…NNEE and VKEAVVEPEKKPRKRGRKPANGREEPLNHVEAER. The segment covering 440–449 has biased composition (basic residues); the sequence is KPRKRGRKPA. Residues 450–463 show a composition bias toward basic and acidic residues; it reads NGREEPLNHVEAER. The segment at 453–466 is basic motif; degenerate; sequence EEPLNHVEAERQRR. Residues 453 to 502 enclose the bHLH domain; that stretch reads EEPLNHVEAERQRREKLNQRFYALRAVVPNVSKMDKASLLGDAIAYINEL. Residues 467–502 are helix-loop-helix motif; the sequence is EKLNQRFYALRAVVPNVSKMDKASLLGDAIAYINEL.

In terms of tissue distribution, highly expressed in trichomes and at lower levels in leaves and flowers. Expressed at low levels in roots, stems, leaves, flowers and fruits.

It localises to the nucleus. Its function is as follows. Transcriptional activator that binds to the G-box motif (5'-AACGTG-3') found in a number of promoters of jasmonate-induced genes. Transcription activator involved in the transcriptional regulation of terpene biosynthesis in glandular trichomes. Binds to the promoter of the linalool synthase TPS5 and promotes TPS5 gene transactivation. Acts synergistically with EOT1 in the transactivation of TPS5. Involved in type VI glandular trichome development. Involved in the activation of terpene synthases required for volatile mono- and sesquiterpenes synthesis by the glandular cells of type VI trichomes. In Solanum lycopersicum (Tomato), this protein is Transcription factor MYC1.